Reading from the N-terminus, the 153-residue chain is Aspartate carbamoyltransferase regulatory chain (153 aa).

Zn(2+)-binding residues include Cys109, Cys114, Cys138, and Cys141.

Belongs to the PyrI family. As to quaternary structure, contains catalytic and regulatory chains. Requires Zn(2+) as cofactor.

Its function is as follows. Involved in allosteric regulation of aspartate carbamoyltransferase. In Wigglesworthia glossinidia brevipalpis, this protein is Aspartate carbamoyltransferase regulatory chain.